The sequence spans 196 residues: Peptidyl-tRNA hydrolase (196 aa).

Tyr-17 provides a ligand contact to tRNA. Residue His-22 is the Proton acceptor of the active site. 3 residues coordinate tRNA: Phe-68, Asn-70, and Asn-116.

Belongs to the PTH family. In terms of assembly, monomer.

Its subcellular location is the cytoplasm. The enzyme catalyses an N-acyl-L-alpha-aminoacyl-tRNA + H2O = an N-acyl-L-amino acid + a tRNA + H(+). Its function is as follows. Hydrolyzes ribosome-free peptidyl-tRNAs (with 1 or more amino acids incorporated), which drop off the ribosome during protein synthesis, or as a result of ribosome stalling. Catalyzes the release of premature peptidyl moieties from peptidyl-tRNA molecules trapped in stalled 50S ribosomal subunits, and thus maintains levels of free tRNAs and 50S ribosomes. The sequence is that of Peptidyl-tRNA hydrolase from Yersinia pestis bv. Antiqua (strain Antiqua).